Here is a 227-residue protein sequence, read N- to C-terminus: Cytochrome c oxidase subunit 2 (227 aa).

Residues 1-14 are Mitochondrial intermembrane-facing; that stretch reads MAYPFQLGLQDATS. Residues 15 to 45 traverse the membrane as a helical segment; sequence PIMEELTNFHDHTLMIVFLISSLVLYIISSM. Topologically, residues 46 to 59 are mitochondrial matrix; the sequence is LATKMTHTSTMDAQ. The chain crosses the membrane as a helical span at residues 60–87; sequence SMETIWTILPAVILVLIALPSLRILYMM. Residues 88–227 lie on the Mitochondrial intermembrane side of the membrane; sequence DEINNPVLTV…FFENWSASMI (140 aa). The Cu cation site is built by histidine 161, cysteine 196, glutamate 198, cysteine 200, histidine 204, and methionine 207. Glutamate 198 lines the Mg(2+) pocket.

This sequence belongs to the cytochrome c oxidase subunit 2 family. In terms of assembly, component of the cytochrome c oxidase (complex IV, CIV), a multisubunit enzyme composed of 14 subunits. The complex is composed of a catalytic core of 3 subunits MT-CO1, MT-CO2 and MT-CO3, encoded in the mitochondrial DNA, and 11 supernumerary subunits COX4I, COX5A, COX5B, COX6A, COX6B, COX6C, COX7A, COX7B, COX7C, COX8 and NDUFA4, which are encoded in the nuclear genome. The complex exists as a monomer or a dimer and forms supercomplexes (SCs) in the inner mitochondrial membrane with NADH-ubiquinone oxidoreductase (complex I, CI) and ubiquinol-cytochrome c oxidoreductase (cytochrome b-c1 complex, complex III, CIII), resulting in different assemblies (supercomplex SCI(1)III(2)IV(1) and megacomplex MCI(2)III(2)IV(2)). Found in a complex with TMEM177, COA6, COX18, COX20, SCO1 and SCO2. Interacts with TMEM177 in a COX20-dependent manner. Interacts with COX20. Interacts with COX16. It depends on Cu cation as a cofactor.

Its subcellular location is the mitochondrion inner membrane. It catalyses the reaction 4 Fe(II)-[cytochrome c] + O2 + 8 H(+)(in) = 4 Fe(III)-[cytochrome c] + 2 H2O + 4 H(+)(out). In terms of biological role, component of the cytochrome c oxidase, the last enzyme in the mitochondrial electron transport chain which drives oxidative phosphorylation. The respiratory chain contains 3 multisubunit complexes succinate dehydrogenase (complex II, CII), ubiquinol-cytochrome c oxidoreductase (cytochrome b-c1 complex, complex III, CIII) and cytochrome c oxidase (complex IV, CIV), that cooperate to transfer electrons derived from NADH and succinate to molecular oxygen, creating an electrochemical gradient over the inner membrane that drives transmembrane transport and the ATP synthase. Cytochrome c oxidase is the component of the respiratory chain that catalyzes the reduction of oxygen to water. Electrons originating from reduced cytochrome c in the intermembrane space (IMS) are transferred via the dinuclear copper A center (CU(A)) of subunit 2 and heme A of subunit 1 to the active site in subunit 1, a binuclear center (BNC) formed by heme A3 and copper B (CU(B)). The BNC reduces molecular oxygen to 2 water molecules using 4 electrons from cytochrome c in the IMS and 4 protons from the mitochondrial matrix. The polypeptide is Cytochrome c oxidase subunit 2 (MT-CO2) (Acomys wilsoni (Wilson's spiny mouse)).